Here is a 211-residue protein sequence, read N- to C-terminus: Putative 3-methyladenine DNA glycosylase (211 aa).

This sequence belongs to the DNA glycosylase MPG family.

The polypeptide is Putative 3-methyladenine DNA glycosylase (Granulibacter bethesdensis (strain ATCC BAA-1260 / CGDNIH1)).